The primary structure comprises 341 residues: Methionine import ATP-binding protein MetN (341 aa).

Residues 2-241 form the ABC transporter domain; it reads INLQDVSKVY…PKEQMTKRFV (240 aa). 38–45 serves as a coordination point for ATP; sequence GYSGAGKS.

It belongs to the ABC transporter superfamily. Methionine importer (TC 3.A.1.24) family. The complex is composed of two ATP-binding proteins (MetN), two transmembrane proteins (MetP) and a solute-binding protein (MetQ).

It localises to the cell membrane. The catalysed reaction is L-methionine(out) + ATP + H2O = L-methionine(in) + ADP + phosphate + H(+). The enzyme catalyses D-methionine(out) + ATP + H2O = D-methionine(in) + ADP + phosphate + H(+). Its function is as follows. Part of the ABC transporter complex MetNPQ involved in methionine import. Responsible for energy coupling to the transport system. It has also been shown to be involved in methionine sulfoxide transport. The chain is Methionine import ATP-binding protein MetN from Bacillus subtilis (strain 168).